The sequence spans 69 residues: Photosystem I reaction center subunit IV (69 aa).

It belongs to the PsaE family.

The protein resides in the cellular thylakoid membrane. In terms of biological role, stabilizes the interaction between PsaC and the PSI core, assists the docking of the ferredoxin to PSI and interacts with ferredoxin-NADP oxidoreductase. The chain is Photosystem I reaction center subunit IV from Prochlorococcus marinus (strain MIT 9215).